The primary structure comprises 521 residues: Adenosylhomocysteinase-like 1 (521 aa).

Residues 1–92 (MNNLADTVVV…EKVQKNSKGS (92 aa)) are disordered. The segment covering 54-73 (RSLSASSTDSFSSASYTGSS) has biased composition (low complexity). Substrate contacts are provided by D220 and E245. Residue 246–248 (SVT) coordinates NAD(+). The substrate site is built by K275 and D279. Residues 311 to 316 (GDVGKG), E332, 388 to 390 (MGH), N435, K515, 515 to 519 (KPNYY), and Y519 each bind NAD(+).

Belongs to the adenosylhomocysteinase family. In terms of assembly, interacts with Ahcy; the interaction may negatively regulate Ahcy catalytic activity. NAD(+) serves as cofactor.

Might play a role in the regulation of methionine metabolism possibly by binding and inactivating Ahcy. The polypeptide is Adenosylhomocysteinase-like 1 (Drosophila melanogaster (Fruit fly)).